An 87-amino-acid chain; its full sequence is Phosphoribosyl-ATP pyrophosphatase (87 aa).

Belongs to the PRA-PH family.

The protein localises to the cytoplasm. It carries out the reaction 1-(5-phospho-beta-D-ribosyl)-ATP + H2O = 1-(5-phospho-beta-D-ribosyl)-5'-AMP + diphosphate + H(+). Its pathway is amino-acid biosynthesis; L-histidine biosynthesis; L-histidine from 5-phospho-alpha-D-ribose 1-diphosphate: step 2/9. This Beutenbergia cavernae (strain ATCC BAA-8 / DSM 12333 / CCUG 43141 / JCM 11478 / NBRC 16432 / NCIMB 13614 / HKI 0122) protein is Phosphoribosyl-ATP pyrophosphatase.